The following is a 195-amino-acid chain: 22.0 kDa heat shock protein (195 aa).

An N-terminal signal peptide occupies residues 1–21; it reads MMKHLLSIFFIGALLLGNIKT. A sHSP domain is found at 62–180; the sequence is RDTSVALSPA…GPRVVNIAAE (119 aa). An N-linked (GlcNAc...) asparagine glycan is attached at Asn-160.

It belongs to the small heat shock protein (HSP20) family. May form oligomeric structures.

The protein resides in the endoplasmic reticulum. The protein is 22.0 kDa heat shock protein (HSP22.0) of Arabidopsis thaliana (Mouse-ear cress).